The sequence spans 169 residues: MYTAGYAHRDSSFSSTASKIARVSTENTTAGLISEVVYREDQPMMTQLLLLPLLQQLGQQSRWQLWLTPQQKLSREWVQASGLPLTKVMQISQLSPCHTVESMVRALRTGNYSVVIGWLADDLTEEEHAELVDAANEGNAMGFIMRPVSASSHATRQLSGLKIHSNLYH.

Residues 106–112 (ALRTGNY) are ftsZ binding. The interval 162-169 (KIHSNLYH) is lon protease binding.

The protein belongs to the SulA family. As to quaternary structure, interacts with FtsZ. In terms of processing, is rapidly cleaved and degraded by the Lon protease once DNA damage is repaired.

Functionally, component of the SOS system and an inhibitor of cell division. Accumulation of SulA causes rapid cessation of cell division and the appearance of long, non-septate filaments. In the presence of GTP, binds a polymerization-competent form of FtsZ in a 1:1 ratio, thus inhibiting FtsZ polymerization and therefore preventing it from participating in the assembly of the Z ring. This mechanism prevents the premature segregation of damaged DNA to daughter cells during cell division. The sequence is that of Cell division inhibitor SulA from Escherichia coli O45:K1 (strain S88 / ExPEC).